Consider the following 115-residue polypeptide: NADH-ubiquinone oxidoreductase chain 3 (115 aa).

Transmembrane regions (helical) follow at residues 5-25 (LTLM…FWLP), 55-75 (FFLV…LLPL), and 86-106 (LMLT…AYEW).

This sequence belongs to the complex I subunit 3 family. Core subunit of respiratory chain NADH dehydrogenase (Complex I) which is composed of 45 different subunits. Interacts with TMEM186. Interacts with TMEM242.

Its subcellular location is the mitochondrion inner membrane. It catalyses the reaction a ubiquinone + NADH + 5 H(+)(in) = a ubiquinol + NAD(+) + 4 H(+)(out). Functionally, core subunit of the mitochondrial membrane respiratory chain NADH dehydrogenase (Complex I) which catalyzes electron transfer from NADH through the respiratory chain, using ubiquinone as an electron acceptor. Essential for the catalytic activity of complex I. The protein is NADH-ubiquinone oxidoreductase chain 3 of Avahi cleesei (Cleese's woolly lemur).